The chain runs to 148 residues: Oleosin 1 (148 aa).

Ala-2 is subject to N-acetylalanine. Positions Ala-2–Lys-28 are polar. The segment at Ala-29–Ser-148 is hydrophobic. The next 2 helical transmembrane spans lie at Gly-37–Ala-57 and Gly-81–Lys-101.

It belongs to the oleosin family.

It is found in the lipid droplet. The protein resides in the membrane. Functionally, may have a structural role to stabilize the lipid body during desiccation of the seed by preventing coalescence of the oil. Probably interacts with both lipid and phospholipid moieties of lipid bodies. May also provide recognition signals for specific lipase anchorage in lipolysis during seedling growth. The polypeptide is Oleosin 1 (OLE1) (Prunus dulcis (Almond)).